The sequence spans 449 residues: GTPase Der (449 aa).

2 EngA-type G domains span residues 4–174 (PIVA…PPKT) and 183–358 (LRVA…AQRQ). GTP is bound by residues 10 to 17 (GRPNVGKS), 57 to 61 (DTAGL), 126 to 129 (NKCD), 189 to 196 (GRPNVGKS), 236 to 240 (DTAGI), and 301 to 304 (NKWD). In terms of domain architecture, KH-like spans 359–444 (KRIPTSELNN…PIVIVFRSRE (86 aa)).

It belongs to the TRAFAC class TrmE-Era-EngA-EngB-Septin-like GTPase superfamily. EngA (Der) GTPase family. In terms of assembly, associates with the 50S ribosomal subunit.

GTPase that plays an essential role in the late steps of ribosome biogenesis. This Chloroflexus aggregans (strain MD-66 / DSM 9485) protein is GTPase Der.